Reading from the N-terminus, the 94-residue chain is Mitochondrial import inner membrane translocase subunit Tim8 A (94 aa).

Positions 47 to 70 (CWDKCIDRPGNKLDSRTESCLVSC) match the Twin CX3C motif motif. 2 disulfides stabilise this stretch: Cys-47-Cys-70 and Cys-51-Cys-66.

This sequence belongs to the small Tim family. In terms of assembly, heterohexamer; composed of 3 copies of TIMM8A and 3 copies of TIMM13, named soluble 70 kDa complex. Associates with the TIM22 complex, whose core is composed of TIMM22.

The protein resides in the mitochondrion inner membrane. Mitochondrial intermembrane chaperone that participates in the import and insertion of some multi-pass transmembrane proteins into the mitochondrial inner membrane. Also required for the transfer of beta-barrel precursors from the TOM complex to the sorting and assembly machinery (SAM complex) of the outer membrane. Acts as a chaperone-like protein that protects the hydrophobic precursors from aggregation and guide them through the mitochondrial intermembrane space. The TIMM8-TIMM13 complex mediates the import of some proteins while the predominant TIMM9-TIMM10 70 kDa complex mediates the import of much more proteins. This is Mitochondrial import inner membrane translocase subunit Tim8 A (timm8a) from Xenopus laevis (African clawed frog).